The following is a 125-amino-acid chain: Small ribosomal subunit protein uS12 (125 aa).

The interval 1–28 (MPTISQLIGSERKRLTRKTKSPALKSCP) is disordered. Position 89 is a 3-methylthioaspartic acid (aspartate 89). The disordered stretch occupies residues 104-125 (TAGVKDRRQSRSKYGAKAPKNN).

Belongs to the universal ribosomal protein uS12 family. In terms of assembly, part of the 30S ribosomal subunit. Contacts proteins S8 and S17. May interact with IF1 in the 30S initiation complex.

Functionally, with S4 and S5 plays an important role in translational accuracy. Its function is as follows. Interacts with and stabilizes bases of the 16S rRNA that are involved in tRNA selection in the A site and with the mRNA backbone. Located at the interface of the 30S and 50S subunits, it traverses the body of the 30S subunit contacting proteins on the other side and probably holding the rRNA structure together. The combined cluster of proteins S8, S12 and S17 appears to hold together the shoulder and platform of the 30S subunit. The protein is Small ribosomal subunit protein uS12 of Prochlorococcus marinus (strain MIT 9515).